The sequence spans 399 residues: Dof zinc finger protein DOF5.1 (399 aa).

The Dof-type zinc finger occupies 95–149 (LKCPRCDSTNTKFCYFNNYSLTQPRHFCKACRRYWTRGGALRSVPVGGGCRRNKR). Zn(2+)-binding residues include Cys-97, Cys-100, Cys-122, and Cys-125. The disordered stretch occupies residues 139–176 (PVGGGCRRNKRTKNSSGGGGGSTSSGNSKSQDSATSND).

In terms of tissue distribution, expressed ubiquitously, especially in the vascular tissues, except in seeds, petals and anthers. Specific to the vascular tissues in young leaves, cotyledons and flower buds. The PEAR proteins (e.g. DOF2.4, DOF5.1, DOF3.2, DOF1.1, DOF5.6 and DOF5.3) form a short-range concentration gradient that peaks at protophloem sieve elements (PSE).

The protein localises to the nucleus. Its function is as follows. Transcription factor that binds specifically to a 5'-AA[AG]G-3' consensus core sequence. Binds to 5'-TAAAGT-3' motif in REV promoter to triggers its transcription, thus regulating adaxial-abaxial polarity and influencing leaf axial patterning in an auxin transport- and response-dependent manner (e.g. IAA6 and IAA19 genes expression). Probably involved in early processes for vascular development. The PEAR proteins (e.g. DOF2.4, DOF5.1, DOF3.2, DOF1.1, DOF5.6 and DOF5.3) activate gene expression that promotes radial growth of protophloem sieve elements. In Arabidopsis thaliana (Mouse-ear cress), this protein is Dof zinc finger protein DOF5.1.